Here is a 426-residue protein sequence, read N- to C-terminus: Probable serine/threonine-protein kinase PBL3 (426 aa).

A disordered region spans residues 1 to 42 (MGNCLDSSAKVDSSSHSPHANSASLSSRVSSKTSRSTVPSSL). The N-myristoyl glycine moiety is linked to residue Gly-2. Cys-4 is lipidated: S-palmitoyl cysteine. Residues 7-42 (SSAKVDSSSHSPHANSASLSSRVSSKTSRSTVPSSL) are compositionally biased toward low complexity. Thr-72 is subject to Phosphothreonine. The 284-residue stretch at 83–366 (FRPDSLLGEG…SEVLAKLDQL (284 aa)) folds into the Protein kinase domain. Residues 89-97 (LGEGGFGYV) and Lys-121 contribute to the ATP site. Tyr-166 carries the post-translational modification Phosphotyrosine. Asp-216 serves as the catalytic Proton acceptor. Ser-250 bears the Phosphoserine mark. Phosphothreonine occurs at positions 251 and 256. Tyr-264 carries the post-translational modification Phosphotyrosine. A compositionally biased stretch (polar residues) spans 367 to 394 (ESTKPGTGVGNRQAQIDSPRGSNGSIVQ). The segment at 367–426 (ESTKPGTGVGNRQAQIDSPRGSNGSIVQKSPRRYSYDRPLLHITPGASPLPTHNHSPRVR) is disordered.

Belongs to the protein kinase superfamily. Ser/Thr protein kinase family. In terms of assembly, interacts with the Xanthomonas campestris effector XopAC/AvrAC. As to expression, strongly expressed in leaves, moderately in flowers, and barely in roots.

Its subcellular location is the cell membrane. It is found in the nucleus. The catalysed reaction is L-seryl-[protein] + ATP = O-phospho-L-seryl-[protein] + ADP + H(+). The enzyme catalyses L-threonyl-[protein] + ATP = O-phospho-L-threonyl-[protein] + ADP + H(+). May be involved in plant defense signaling. The polypeptide is Probable serine/threonine-protein kinase PBL3 (Arabidopsis thaliana (Mouse-ear cress)).